A 908-amino-acid chain; its full sequence is Isoleucine--tRNA ligase (908 aa).

The 'HIGH' region signature appears at 59 to 69; that stretch reads PYANGDLHIGH. L-isoleucyl-5'-AMP is bound at residue Glu554. The 'KMSKS' region signature appears at 595 to 599; sequence KMSKS. Residue Lys598 participates in ATP binding. Residues Cys882, Cys885, Cys898, and Cys901 each coordinate Zn(2+).

It belongs to the class-I aminoacyl-tRNA synthetase family. IleS type 1 subfamily. Monomer. The cofactor is Zn(2+).

It is found in the cytoplasm. It carries out the reaction tRNA(Ile) + L-isoleucine + ATP = L-isoleucyl-tRNA(Ile) + AMP + diphosphate. In terms of biological role, catalyzes the attachment of isoleucine to tRNA(Ile). As IleRS can inadvertently accommodate and process structurally similar amino acids such as valine, to avoid such errors it has two additional distinct tRNA(Ile)-dependent editing activities. One activity is designated as 'pretransfer' editing and involves the hydrolysis of activated Val-AMP. The other activity is designated 'posttransfer' editing and involves deacylation of mischarged Val-tRNA(Ile). This Mesoplasma florum (strain ATCC 33453 / NBRC 100688 / NCTC 11704 / L1) (Acholeplasma florum) protein is Isoleucine--tRNA ligase.